The primary structure comprises 483 residues: Probable glycosyltransferase 6 (483 aa).

The Cytoplasmic portion of the chain corresponds to 1 to 40; it reads MAASETAPFGVSAASKGGGGVAGARAQHGQLAVAGRVHDA. A helical; Signal-anchor for type II membrane protein transmembrane segment spans residues 41-61; that stretch reads LVFAAGAVAAVLVLLATASFL. Over 62 to 483 the chain is Lumenal; the sequence is SPMPVTNLVA…PLPFDYPAAR (422 aa). Residue asparagine 144 is glycosylated (N-linked (GlcNAc...) asparagine).

It belongs to the glycosyltransferase 34 family.

It is found in the golgi apparatus membrane. Probable glycosyltransferase that may be involved in the biosynthesis of xyloglucan. This Oryza sativa subsp. indica (Rice) protein is Probable glycosyltransferase 6.